A 593-amino-acid chain; its full sequence is Aspartate--tRNA ligase (593 aa).

Residue E180 coordinates L-aspartate. The aspartate stretch occupies residues 204–207; that stretch reads QIFK. Residue R226 participates in L-aspartate binding. Residues 226–228 and Q235 contribute to the ATP site; that span reads RDE. H453 serves as a coordination point for L-aspartate. E487 serves as a coordination point for ATP. R494 lines the L-aspartate pocket. 539–542 serves as a coordination point for ATP; that stretch reads GLDR.

This sequence belongs to the class-II aminoacyl-tRNA synthetase family. Type 1 subfamily. Homodimer.

The protein localises to the cytoplasm. It catalyses the reaction tRNA(Asp) + L-aspartate + ATP = L-aspartyl-tRNA(Asp) + AMP + diphosphate. Catalyzes the attachment of L-aspartate to tRNA(Asp) in a two-step reaction: L-aspartate is first activated by ATP to form Asp-AMP and then transferred to the acceptor end of tRNA(Asp). The chain is Aspartate--tRNA ligase from Clostridium botulinum (strain 657 / Type Ba4).